The chain runs to 865 residues: Prominin-1 (865 aa).

A signal peptide spans 1 to 19; sequence MALVLGSLLLLGLCGNSFS. At 20-108 the chain is on the extracellular side; it reads GGQPSSTDAP…GLKIVYYEAG (89 aa). Residues 109-129 traverse the membrane as a helical segment; sequence IILCCVLGLLFIILMPLVGYF. The Cytoplasmic segment spans residues 130–157; sequence FCMCRCCNKCGGEMHQRQKENGPFLRKC. The chain crosses the membrane as a helical span at residues 158 to 178; sequence FAISLLVICIIISIGIFYGFV. Over 179-433 the chain is Extracellular; sequence ANHQVRTRIK…LPTLEEYDSY (255 aa). Asn-220 carries N-linked (GlcNAc...) asparagine glycosylation. Lys-225, Lys-257, and Lys-264 each carry N6-acetyllysine. N-linked (GlcNAc...) asparagine glycosylation is found at Asn-274, Asn-395, and Asn-414. A helical transmembrane segment spans residues 434-454; that stretch reads WWLGGLVICSLLTLIVIFYYL. Residues 455-486 are Cytoplasmic-facing; it reads GLLCGVCGYDRHATPTTRGCVSNTGGVFLMVG. Residues 487–507 traverse the membrane as a helical segment; it reads VGLSFLFCWILMIIVVLTFVF. Over 508–792 the chain is Extracellular; it reads GANVEKLICE…LCSYIIDPLN (285 aa). Residues Asn-548, Asn-580, Asn-729, and Asn-730 are each glycosylated (N-linked (GlcNAc...) asparagine). The chain crosses the membrane as a helical span at residues 793–813; the sequence is LFWFGIGKATVFLLPALIFAV. Residues 814 to 865 lie on the Cytoplasmic side of the membrane; that stretch reads KLAKYYRRMDSEDVYDDVETIPMKNMENGNNGYHKDHVYGIHNPVMTSPSQH. Ser-863 carries the phosphoserine modification.

This sequence belongs to the prominin family. Interacts with CDHR1 and with actin filaments. Interacts with NAT8 and NAT8B. Post-translationally, isoform 1 and isoform 2 are glycosylated. Acetylation at Lys-225, Lys-257 and Lys-264 by NAT8 and NAT8B may control PROM1 protein expression and its function in cell apoptosis. Isoform 1 is selectively expressed on CD34 hematopoietic stem and progenitor cells in adult and fetal bone marrow, fetal liver, cord blood and adult peripheral blood. Isoform 1 is not detected on other blood cells. Isoform 1 is also expressed in a number of non-lymphoid tissues including retina, pancreas, placenta, kidney, liver, lung, brain and heart. Found in saliva within small membrane particles. Isoform 2 is predominantly expressed in fetal liver, skeletal muscle, kidney, and heart as well as adult pancreas, kidney, liver, lung, and placenta. Isoform 2 is highly expressed in fetal liver, low in bone marrow, and barely detectable in peripheral blood. Isoform 2 is expressed on hematopoietic stem cells and in epidermal basal cells (at protein level). Expressed in adult retina by rod and cone photoreceptor cells (at protein level).

It is found in the apical cell membrane. The protein resides in the cell projection. Its subcellular location is the microvillus membrane. The protein localises to the cilium. It localises to the photoreceptor outer segment. It is found in the endoplasmic reticulum. The protein resides in the endoplasmic reticulum-Golgi intermediate compartment. Its function is as follows. May play a role in cell differentiation, proliferation and apoptosis. Binds cholesterol in cholesterol-containing plasma membrane microdomains and may play a role in the organization of the apical plasma membrane in epithelial cells. During early retinal development acts as a key regulator of disk morphogenesis. Involved in regulation of MAPK and Akt signaling pathways. In neuroblastoma cells suppresses cell differentiation such as neurite outgrowth in a RET-dependent manner. The chain is Prominin-1 (PROM1) from Homo sapiens (Human).